A 359-amino-acid chain; its full sequence is Ribosomal RNA large subunit methyltransferase M (359 aa).

S-adenosyl-L-methionine-binding positions include Ser-186, 219 to 222 (CPGG), Asp-238, Asp-258, and Asp-275. Catalysis depends on Lys-304, which acts as the Proton acceptor.

This sequence belongs to the class I-like SAM-binding methyltransferase superfamily. RNA methyltransferase RlmE family. RlmM subfamily. Monomer.

It is found in the cytoplasm. It carries out the reaction cytidine(2498) in 23S rRNA + S-adenosyl-L-methionine = 2'-O-methylcytidine(2498) in 23S rRNA + S-adenosyl-L-homocysteine + H(+). Its function is as follows. Catalyzes the 2'-O-methylation at nucleotide C2498 in 23S rRNA. This is Ribosomal RNA large subunit methyltransferase M from Vibrio vulnificus (strain YJ016).